A 291-amino-acid chain; its full sequence is ATP synthase gamma chain (291 aa).

Belongs to the ATPase gamma chain family. F-type ATPases have 2 components, CF(1) - the catalytic core - and CF(0) - the membrane proton channel. CF(1) has five subunits: alpha(3), beta(3), gamma(1), delta(1), epsilon(1). CF(0) has three main subunits: a, b and c.

It localises to the cell inner membrane. In terms of biological role, produces ATP from ADP in the presence of a proton gradient across the membrane. The gamma chain is believed to be important in regulating ATPase activity and the flow of protons through the CF(0) complex. The chain is ATP synthase gamma chain from Burkholderia pseudomallei (strain 1106a).